The following is a 172-amino-acid chain: L-amino acid N-acyltransferase MnaT (172 aa).

The N-acetyltransferase domain occupies 1–163; the sequence is MSIRFARKAD…DLTFMQLQLD (163 aa). Acetyl-CoA contacts are provided by residues 85–87, 93–98, N124, and S133; these read VYV and GKGLGR.

It belongs to the acetyltransferase family. PAT/BAR subfamily.

The enzyme catalyses L-methionine + acetyl-CoA = N-acetyl-L-methionine + CoA + H(+). The catalysed reaction is propanoyl-CoA + L-methionine = N-propanoyl-L-methioninate + CoA + H(+). It carries out the reaction L-alpha-phenylglycine + acetyl-CoA = N-acetyl-L-alpha-phenylglycine + CoA + H(+). It catalyses the reaction L-methionine sulfoximine + acetyl-CoA = N-acetyl-L-methionine sulfoximine + CoA + H(+). The enzyme catalyses L-methionine sulfone + acetyl-CoA = N-acetyl-L-methionine sulfone + CoA + H(+). Acyltransferase that appears to be required for E.coli optimal growth rate and yield via the formation of N-acetylated amino acids. Catalyzes the acylation of L-methionine using acetyl-CoA or propanoyl-CoA as acyl donors, and the acetylation of L-phenylglycine. Is also able to N-acylate other free L-amino acids and their derivatives using a CoA thioester as cosubstrate. Using acetyl-CoA as an acyl donor, substrate specificity is methionine sulfone &gt; methionine sulfoximine &gt; methionine sulfoxide &gt; methionine. Asparagine, lysine, glutamine, aspartate and glutamate are very poor substrates. Using methionine as a substrate, acyl donor preference is propanoyl-CoA &gt; acetyl-CoA &gt;&gt; butyryl-CoA. Likely plays a role in the resistance against the toxic effects of L-methionine sulfoximine (MSX), via its ability to catalyze its acetylation; MSX is a rare amino acid which inhibits glutamine synthetase (GlnA). The polypeptide is L-amino acid N-acyltransferase MnaT (Escherichia coli (strain K12)).